The sequence spans 129 residues: Small ribosomal subunit protein uS11 (129 aa).

This sequence belongs to the universal ribosomal protein uS11 family. In terms of assembly, part of the 30S ribosomal subunit. Interacts with proteins S7 and S18. Binds to IF-3.

Its function is as follows. Located on the platform of the 30S subunit, it bridges several disparate RNA helices of the 16S rRNA. Forms part of the Shine-Dalgarno cleft in the 70S ribosome. The polypeptide is Small ribosomal subunit protein uS11 (Parabacteroides distasonis (strain ATCC 8503 / DSM 20701 / CIP 104284 / JCM 5825 / NCTC 11152)).